Reading from the N-terminus, the 430-residue chain is C4-dicarboxylate transport protein (430 aa).

A run of 9 helical transmembrane segments spans residues 8–28 (SLYF…HFYP), 44–64 (LIKM…IAGM), 76–96 (AALL…LVVV), 144–164 (AFAS…GFAL), 184–204 (VIFG…FGAM), 222–242 (LILC…GSIA), 289–309 (VVGL…SIYL), 326–346 (IWHQ…AAGV), and 352–372 (IVLA…LALI).

This sequence belongs to the dicarboxylate/amino acid:cation symporter (DAACS) (TC 2.A.23) family.

Its subcellular location is the cell inner membrane. Responsible for the transport of dicarboxylates such as succinate, fumarate, and malate from the periplasm across the membrane. This is C4-dicarboxylate transport protein from Pectobacterium atrosepticum (strain SCRI 1043 / ATCC BAA-672) (Erwinia carotovora subsp. atroseptica).